A 187-amino-acid polypeptide reads, in one-letter code: Dirigent protein 23 (187 aa).

The signal sequence occupies residues methionine 1–glycine 24. Residue asparagine 182 is glycosylated (N-linked (GlcNAc...) asparagine).

The protein belongs to the plant dirigent protein family. In terms of assembly, homodimer.

It localises to the secreted. The protein resides in the extracellular space. It is found in the apoplast. Dirigent proteins impart stereoselectivity on the phenoxy radical-coupling reaction, yielding optically active lignans from two molecules of coniferyl alcohol in the biosynthesis of lignans, flavonolignans, and alkaloids and thus plays a central role in plant secondary metabolism. The chain is Dirigent protein 23 (DIR23) from Arabidopsis thaliana (Mouse-ear cress).